A 58-amino-acid chain; its full sequence is Cecropin-A (58 aa).

Positions 1–23 are cleaved as a signal peptide; sequence MNFSKIFIFVVLAVLLLCSQTEA. Leu57 carries the post-translational modification Leucine amide.

Belongs to the cecropin family. As to expression, relatively abundant in head, thorax and to a lesser extent in abdominal carcass and anterior midgut.

It is found in the secreted. Its function is as follows. Antibacterial activity against several Gram-positive and Gram-negative bacteria. Antifungal activity against A.fumigatus, B.cinerea, F.culmorum, F.oxysporum, N.crassa, C.albicans, C.neoformans and S.cerevisiae. The polypeptide is Cecropin-A (CecA) (Anopheles gambiae (African malaria mosquito)).